A 379-amino-acid polypeptide reads, in one-letter code: Putative nucleosome assembly protein C2D10.11C (379 aa).

The segment covering Met-1 to Lys-10 has biased composition (basic and acidic residues). Disordered regions lie at residues Met-1–Leu-30 and Ser-345–Asp-379. The segment covering Ala-16 to Val-28 has biased composition (polar residues).

It belongs to the nucleosome assembly protein (NAP) family.

Its subcellular location is the nucleus. The protein is Putative nucleosome assembly protein C2D10.11C of Schizosaccharomyces pombe (strain 972 / ATCC 24843) (Fission yeast).